A 598-amino-acid chain; its full sequence is 2-succinyl-5-enolpyruvyl-6-hydroxy-3-cyclohexene-1-carboxylate synthase (598 aa).

This sequence belongs to the TPP enzyme family. MenD subfamily. As to quaternary structure, homodimer. Requires Mg(2+) as cofactor. The cofactor is Mn(2+). Thiamine diphosphate serves as cofactor.

It catalyses the reaction isochorismate + 2-oxoglutarate + H(+) = 5-enolpyruvoyl-6-hydroxy-2-succinyl-cyclohex-3-ene-1-carboxylate + CO2. It participates in quinol/quinone metabolism; 1,4-dihydroxy-2-naphthoate biosynthesis; 1,4-dihydroxy-2-naphthoate from chorismate: step 2/7. Its pathway is cofactor biosynthesis; phylloquinone biosynthesis. In terms of biological role, catalyzes the thiamine diphosphate-dependent decarboxylation of 2-oxoglutarate and the subsequent addition of the resulting succinic semialdehyde-thiamine pyrophosphate anion to isochorismate to yield 2-succinyl-5-enolpyruvyl-6-hydroxy-3-cyclohexene-1-carboxylate (SEPHCHC). The protein is 2-succinyl-5-enolpyruvyl-6-hydroxy-3-cyclohexene-1-carboxylate synthase of Prochlorococcus marinus (strain NATL2A).